Here is a 469-residue protein sequence, read N- to C-terminus: Tetratricopeptide repeat protein 38 (469 aa).

Residue alanine 2 is modified to N-acetylalanine. Position 5 is a phosphoserine (serine 5). TPR repeat units lie at residues 108 to 141 (REQL…HPTD), 180 to 213 (SYVK…NPTD), and 252 to 285 (CHNY…SLQA).

The protein belongs to the TTC38 family.

This Homo sapiens (Human) protein is Tetratricopeptide repeat protein 38 (TTC38).